The chain runs to 151 residues: Cell division protein SepF (151 aa).

The protein belongs to the SepF family. As to quaternary structure, homodimer. Interacts with FtsZ.

It localises to the cytoplasm. Functionally, cell division protein that is part of the divisome complex and is recruited early to the Z-ring. Probably stimulates Z-ring formation, perhaps through the cross-linking of FtsZ protofilaments. Its function overlaps with FtsA. The protein is Cell division protein SepF of Desulfitobacterium hafniense (strain Y51).